Reading from the N-terminus, the 201-residue chain is Small ribosomal subunit protein uS4c (201 aa).

The region spanning 89–152 (MRLDNILFRL…NSRTLVQNLI (64 aa)) is the S4 RNA-binding domain.

It belongs to the universal ribosomal protein uS4 family. As to quaternary structure, part of the 30S ribosomal subunit. Contacts protein S5. The interaction surface between S4 and S5 is involved in control of translational fidelity.

The protein resides in the plastid. It is found in the chloroplast. One of the primary rRNA binding proteins, it binds directly to 16S rRNA where it nucleates assembly of the body of the 30S subunit. Functionally, with S5 and S12 plays an important role in translational accuracy. This is Small ribosomal subunit protein uS4c (rps4) from Crucihimalaya wallichii (Rock-cress).